The following is a 337-amino-acid chain: Nucleotide sugar transporter SLC35D2 (337 aa).

Topologically, residues 1 to 27 are cytoplasmic; that stretch reads MTAGGQAEAEGAGGEPGAARLPSRVAR. A helical membrane pass occupies residues 28-48; that stretch reads LLSALFYGTCSFLIVLVNKAL. The Extracellular portion of the chain corresponds to 49-53; sequence LTTYG. The helical transmembrane segment at 54-74 threads the bilayer; the sequence is FPSPIFLGIGQMAATIMILYV. Topologically, residues 75–146 are cytoplasmic; that stretch reads SKLNKIIHFP…IILGKQYSLN (72 aa). 2 helical membrane passes run 147–167 and 168–188; these read IILSVFAIILGAFIAAGSDLA and FNLEGYIFVFLNDIFTAANGV. At 189-201 the chain is on the cytoplasmic side; it reads YTKQKMDPKELGK. The helical transmembrane segment at 202–222 threads the bilayer; sequence YGVLFYNACFMIIPTLIISVS. Over 223–237 the chain is Extracellular; sequence TGDLQQATEFNQWKN. A helical membrane pass occupies residues 238–258; that stretch reads VVFILQFLLSCFLGFLLMYST. The Cytoplasmic portion of the chain corresponds to 259–265; the sequence is VLCSYYN. Residues 266–288 form a helical membrane-spanning segment; sequence SALTTAVVGAIKNVSVAYIGILI. The Extracellular segment spans residues 289–292; it reads GGDY. Residues 293–315 form a helical membrane-spanning segment; it reads IFSLLNFVGLNICMAGGLRYSFL. Over 316-337 the chain is Cytoplasmic; it reads TLSSQLKPKPVGEENICLDLKS.

The protein belongs to the TPT transporter family. SLC35D subfamily. Highly expressed in heart, kidney, small intestine, placenta, lung and peripheral blood leukocyte. Weakly expressed in skeletal muscle and spleen. Not expressed in brain, colon and thymus.

The protein localises to the golgi apparatus membrane. It carries out the reaction UMP(out) + UDP-N-acetyl-alpha-D-glucosamine(in) = UMP(in) + UDP-N-acetyl-alpha-D-glucosamine(out). The enzyme catalyses UMP(out) + UDP-alpha-D-glucose(in) = UMP(in) + UDP-alpha-D-glucose(out). In terms of biological role, nucleotide sugar antiporter transporting UDP-N-acetylglucosamine (UDP-GlcNAc) and UDP-glucose (UDP-Glc) from the cytosol into the lumen of the Golgi in exchange of UMP. By supplying UDP-N-acetylglucosamine, a donor substrate to heparan sulfate synthases, probably takes part in the synthesis of these glycoconjugates. This chain is Nucleotide sugar transporter SLC35D2, found in Homo sapiens (Human).